The sequence spans 296 residues: Phosphatidylserine decarboxylase proenzyme (296 aa).

Catalysis depends on charge relay system; for autoendoproteolytic cleavage activity residues Asp-113, His-169, and Ser-256. The Schiff-base intermediate with substrate; via pyruvic acid; for decarboxylase activity role is filled by Ser-256. Ser-256 carries the post-translational modification Pyruvic acid (Ser); by autocatalysis.

Belongs to the phosphatidylserine decarboxylase family. PSD-B subfamily. Prokaryotic type II sub-subfamily. In terms of assembly, heterodimer of a large membrane-associated beta subunit and a small pyruvoyl-containing alpha subunit. Pyruvate serves as cofactor. In terms of processing, is synthesized initially as an inactive proenzyme. Formation of the active enzyme involves a self-maturation process in which the active site pyruvoyl group is generated from an internal serine residue via an autocatalytic post-translational modification. Two non-identical subunits are generated from the proenzyme in this reaction, and the pyruvate is formed at the N-terminus of the alpha chain, which is derived from the carboxyl end of the proenzyme. The autoendoproteolytic cleavage occurs by a canonical serine protease mechanism, in which the side chain hydroxyl group of the serine supplies its oxygen atom to form the C-terminus of the beta chain, while the remainder of the serine residue undergoes an oxidative deamination to produce ammonia and the pyruvoyl prosthetic group on the alpha chain. During this reaction, the Ser that is part of the protease active site of the proenzyme becomes the pyruvoyl prosthetic group, which constitutes an essential element of the active site of the mature decarboxylase.

The protein localises to the cell membrane. The enzyme catalyses a 1,2-diacyl-sn-glycero-3-phospho-L-serine + H(+) = a 1,2-diacyl-sn-glycero-3-phosphoethanolamine + CO2. Its pathway is phospholipid metabolism; phosphatidylethanolamine biosynthesis; phosphatidylethanolamine from CDP-diacylglycerol: step 2/2. Functionally, catalyzes the formation of phosphatidylethanolamine (PtdEtn) from phosphatidylserine (PtdSer). The sequence is that of Phosphatidylserine decarboxylase proenzyme from Clostridium botulinum (strain Eklund 17B / Type B).